Consider the following 213-residue polypeptide: Protein MobE (213 aa).

This Acidithiobacillus ferrooxidans (Thiobacillus ferrooxidans) protein is Protein MobE (mobE).